The following is a 623-amino-acid chain: Phosphoglucomutase, chloroplastic (623 aa).

The N-terminal 63 residues, 1–63 (MTSTYTRFDT…SSSSSSVVAG (63 aa)), are a transit peptide targeting the chloroplast. Arg88 and Ser181 together coordinate alpha-D-glucose 1,6-bisphosphate. Catalysis depends on Ser181, which acts as the Phosphoserine intermediate. Mg(2+)-binding residues include Ser181, Asp346, Asp348, and Asp350. Ser181 is modified (phosphoserine). Asp350, Arg351, Thr414, Glu433, Ser435, and Lys446 together coordinate alpha-D-glucose 1,6-bisphosphate.

Belongs to the phosphohexose mutase family. As to quaternary structure, monomer. The cofactor is Mg(2+). As to expression, expressed in flowers, siliques and germinating seeds.

The protein resides in the plastid. The protein localises to the chloroplast. The enzyme catalyses alpha-D-glucose 1-phosphate = alpha-D-glucose 6-phosphate. It carries out the reaction O-phospho-L-seryl-[protein] + alpha-D-glucose 1-phosphate = alpha-D-glucose 1,6-bisphosphate + L-seryl-[protein]. It catalyses the reaction alpha-D-glucose 1,6-bisphosphate + L-seryl-[protein] = O-phospho-L-seryl-[protein] + alpha-D-glucose 6-phosphate. With respect to regulation, inhibited by the Calvin cycle intermediates fructose-1,6-bisphosphate and ribulose-1,5-bisphosphate. Functionally, catalyzes the reversible isomerization of alpha-D-glucose 1-phosphate to alpha-D-glucose 6-phosphate. The mechanism proceeds via the intermediate compound alpha-D-glucose 1,6-bisphosphate. This enzyme participates in both the breakdown and synthesis of glucose. Factor that affects seed oil content. Accumulated starch in young embryos may play an important role in providing carbon resources for seed storage lipid biosynthesis in oilseed plants. Promotes gravitropic responses, negative in shoots but positive in roots, by facilitating starch granules (statoliths) formation in hypocotyls and roots columella. In Arabidopsis thaliana (Mouse-ear cress), this protein is Phosphoglucomutase, chloroplastic.